We begin with the raw amino-acid sequence, 105 residues long: Phosphoribosyl-AMP cyclohydrolase (105 aa).

Asp72 contributes to the Mg(2+) binding site. Cys73 contributes to the Zn(2+) binding site. Asp74 and Asp76 together coordinate Mg(2+). The Zn(2+) site is built by Cys89 and Cys96.

This sequence belongs to the PRA-CH family. As to quaternary structure, homodimer. It depends on Mg(2+) as a cofactor. Zn(2+) is required as a cofactor.

The protein localises to the cytoplasm. The catalysed reaction is 1-(5-phospho-beta-D-ribosyl)-5'-AMP + H2O = 1-(5-phospho-beta-D-ribosyl)-5-[(5-phospho-beta-D-ribosylamino)methylideneamino]imidazole-4-carboxamide. It functions in the pathway amino-acid biosynthesis; L-histidine biosynthesis; L-histidine from 5-phospho-alpha-D-ribose 1-diphosphate: step 3/9. In terms of biological role, catalyzes the hydrolysis of the adenine ring of phosphoribosyl-AMP. This chain is Phosphoribosyl-AMP cyclohydrolase, found in Listeria monocytogenes serotype 4b (strain CLIP80459).